Here is a 404-residue protein sequence, read N- to C-terminus: Dual-specificity RNA methyltransferase RlmN (404 aa).

Glu119 serves as the catalytic Proton acceptor. The 233-residue stretch at 126 to 358 folds into the Radical SAM core domain; it reads VGRAGALCVS…NKAGYSSPIR (233 aa). Cys133 and Cys369 form a disulfide bridge. [4Fe-4S] cluster contacts are provided by Cys140, Cys144, and Cys147. Residues 195–196, Ser227, 249–251, and Asn326 each bind S-adenosyl-L-methionine; these read GE and SLH. The S-methylcysteine intermediate role is filled by Cys369.

The protein belongs to the radical SAM superfamily. RlmN family. Requires [4Fe-4S] cluster as cofactor.

Its subcellular location is the cytoplasm. It catalyses the reaction adenosine(2503) in 23S rRNA + 2 reduced [2Fe-2S]-[ferredoxin] + 2 S-adenosyl-L-methionine = 2-methyladenosine(2503) in 23S rRNA + 5'-deoxyadenosine + L-methionine + 2 oxidized [2Fe-2S]-[ferredoxin] + S-adenosyl-L-homocysteine. It carries out the reaction adenosine(37) in tRNA + 2 reduced [2Fe-2S]-[ferredoxin] + 2 S-adenosyl-L-methionine = 2-methyladenosine(37) in tRNA + 5'-deoxyadenosine + L-methionine + 2 oxidized [2Fe-2S]-[ferredoxin] + S-adenosyl-L-homocysteine. In terms of biological role, specifically methylates position 2 of adenine 2503 in 23S rRNA and position 2 of adenine 37 in tRNAs. m2A2503 modification seems to play a crucial role in the proofreading step occurring at the peptidyl transferase center and thus would serve to optimize ribosomal fidelity. The protein is Dual-specificity RNA methyltransferase RlmN of Caulobacter sp. (strain K31).